A 22-amino-acid chain; its full sequence is Ocellatin-LB1 (22 aa).

Met-22 is modified (methionine amide).

As to expression, expressed by the skin glands.

The protein localises to the secreted. Antibacterial peptide that inhibits Gram-negative bacteria A.actinomycetemcomitans ATCC 29522 (MIC=222.37 uM) and E.coli ATCC 25922 (MIC=114.04 uM). Also has antifungal activity against C.albicans ATCC 18804 (MIC=233.55 uM) and C.lusitaniae ATCC 56936 (MIC=233.55 uM). No activity against the Gram-positive bacterium S.aureus ATCC 25923. Shows virtually no hemolytic activity towards rabbit erythrocytes. The protein is Ocellatin-LB1 of Leptodactylus labyrinthicus (Labyrinth frog).